We begin with the raw amino-acid sequence, 630 residues long: DNA mismatch repair protein MutL (630 aa).

Polar residues predominate over residues 398–408; it reads TQTNAFGSMAT. The segment at 398–425 is disordered; the sequence is TQTNAFGSMATSRDSSRGSYSASESRQR.

The protein belongs to the DNA mismatch repair MutL/HexB family.

This protein is involved in the repair of mismatches in DNA. It is required for dam-dependent methyl-directed DNA mismatch repair. May act as a 'molecular matchmaker', a protein that promotes the formation of a stable complex between two or more DNA-binding proteins in an ATP-dependent manner without itself being part of a final effector complex. In Shewanella baltica (strain OS185), this protein is DNA mismatch repair protein MutL.